An 89-amino-acid chain; its full sequence is Putative acyl-CoA-binding protein (89 aa).

One can recognise an ACB domain in the interval Val-3 to Leu-88. An acyl-CoA-binding positions include Lys-15, Tyr-30–Lys-34, Lys-52, Lys-56, and Tyr-75.

This sequence belongs to the ACBP family.

Functionally, binds medium- and long-chain acyl-CoA esters with very high affinity and may function as an intracellular carrier of acyl-CoA esters. This Hypsibius exemplaris (Freshwater tardigrade) protein is Putative acyl-CoA-binding protein.